A 418-amino-acid chain; its full sequence is Sprouty-related, EVH1 domain-containing protein 2 (418 aa).

Positions 5 to 122 (THPDDDSYIV…RGVRKAIEDL (118 aa)) constitute a WH1 domain. Residues 127–172 (TTSSSTIHNEAELGDDDVFTTATDSSSNSSQKREQPTRTVSSPTSC) are disordered. A compositionally biased stretch (polar residues) spans 146-156 (TTATDSSSNSS). A KBD domain is found at 201-257 (PYRQVSFPDDDEEIVRINPREKIWMTGYEDYRHAPVRGKYPDPSEDVDSSYVRFAKG). Residue Ser206 is modified to Phosphoserine. Tyr228 and Tyr231 each carry phosphotyrosine. The tract at residues 275–302 (GLGEDPKGRGGSVIKTQPSRGKSRRRKE) is disordered. The SPR domain maps to 308–416 (RCVYCRDMFN…CRCCGGKHKA (109 aa)).

Homodimer and heterodimer. Able to interact with SPRED1 to form heterodimers. Interacts with RAS. May interact with ZDHHC13 (via ANK repeats) and ZDHHC17 (via ANK repeats). Interacts with TESK1. Interacts with NF1. Post-translationally, phosphorylated on serine and threonine residues. Phosphorylated on tyrosine. Phosphorylation of Tyr-228 and Tyr-231 are required for ubiquitination. In terms of processing, ubiquitinated; leading to degradation by the proteasome.

The protein resides in the cell membrane. It is found in the cytoplasmic vesicle. It localises to the secretory vesicle membrane. The protein localises to the cytoplasm. Negatively regulates Ras signaling pathways and downstream activation of MAP kinases. Recruits and translocates NF1 to the cell membrane, thereby enabling NF1-dependent hydrolysis of active GTP-bound Ras to inactive GDP-bound Ras. Inhibits fibroblast growth factor (FGF)-induced retinal lens fiber differentiation, probably by inhibiting FGF-mediated phosphorylation of ERK1/2. Inhibits TGFB-induced epithelial-to-mesenchymal transition in lens epithelial cells. The chain is Sprouty-related, EVH1 domain-containing protein 2 (SPRED2) from Pongo abelii (Sumatran orangutan).